Reading from the N-terminus, the 417-residue chain is D-amino acid dehydrogenase (417 aa).

Residue 3-17 (VIVIGSGVIGLTSAW) participates in FAD binding.

The protein belongs to the DadA oxidoreductase family. The cofactor is FAD.

The enzyme catalyses a D-alpha-amino acid + A + H2O = a 2-oxocarboxylate + AH2 + NH4(+). Its pathway is amino-acid degradation; D-alanine degradation; NH(3) and pyruvate from D-alanine: step 1/1. Oxidative deamination of D-amino acids. The sequence is that of D-amino acid dehydrogenase from Vibrio atlanticus (strain LGP32) (Vibrio splendidus (strain Mel32)).